We begin with the raw amino-acid sequence, 426 residues long: Cuticle-degrading serine protease (426 aa).

The first 21 residues, 1 to 21 (MLTNGLISLLAIAGLATNAFA), serve as a signal peptide directing secretion. Residues 22–123 (GPIRKVSNAG…VEQDTVVTTY (102 aa)) constitute a propeptide that is removed on maturation. Positions 39-122 (KYIVVLKKGL…YVEQDTVVTT (84 aa)) constitute an Inhibitor I9 domain. In terms of domain architecture, Peptidase S8 spans 130 to 426 (TWGLDRISHE…TNHQVTIVAS (297 aa)). Asp-164 serves as the catalytic Charge relay system. N-linked (GlcNAc...) asparagine glycosylation occurs at Asn-178. Catalysis depends on His-200, which acts as the Charge relay system. Asn-252 carries an N-linked (GlcNAc...) asparagine glycan. Ser-353 serves as the catalytic Charge relay system.

Belongs to the peptidase S8 family.

It localises to the secreted. Its activity is regulated as follows. Inhibited by PMSF, SSI, the peptide Phe-Val and by Phe, but not by EDTA. Its function is as follows. Hydrolyzes gelatin, casein, the chromogenic substrate azocoll and the cuticle of the nematode P.redivivus. Immobilizes P.redivivus. The polypeptide is Cuticle-degrading serine protease (Orbilia oligospora (Nematode-trapping fungus)).